Reading from the N-terminus, the 623-residue chain is MSKVIGIDLGTTNSCVAVYERGESKVIPNKEGKNTTPSVVAFTDKGEVLVGDSAKRQAVTNPEKTIYSIKRIMGLMINEDAAKEAKNRLPYHITERNGACAIEIAGKIYTPQEISAKVLMKLKEDAEAFLGESVVDAVITVPAYFNDAQRKATKEAGTIAGLNVLRIINEPTSAALAYGLDKKDSEKIVVYDLGGGTFDVTVLETGDNVVEVLATGGNAFLGGDDFDNKLIDFLANEFKDETGIDLKNDVMALQRLKEAAENAKKELSSANETEINLPFITADASGPKHLVKKLTRAKFEGMIDSLVAETITKINEVVSDAGLKKDEIKEIVMVGGSTRVPLVQEEVKKAFNKDLNKSVNPDEVVAIGAAIQGAVIKGDVKDVLLLDVTPLSLGIETLGGVMTKIIEKGTTIPTKKEQVFSTAEDNQSAVTINVLQGEREFSRDNKSLGNFNLEGIPPAPRGMPQIEVTFDIDANGILTVSAKDKATGKAQEIKITGSSGLSEEEINNMVKDAELHKEEDKKRKEAVDARNAADSLAHQVEKSLSELGEKVAAADKENIQKALDDLRETLKNQNASKEEIESKMKALSEVSHKLAENMYKKDEPNTANDKKKKDDDVIDAEVE.

Thr-197 is subject to Phosphothreonine; by autocatalysis. Basic and acidic residues predominate over residues 595-615; the sequence is AENMYKKDEPNTANDKKKKDD. The tract at residues 595-623 is disordered; sequence AENMYKKDEPNTANDKKKKDDDVIDAEVE.

This sequence belongs to the heat shock protein 70 family.

Acts as a chaperone. The sequence is that of Chaperone protein DnaK from Campylobacter jejuni subsp. jejuni serotype O:6 (strain 81116 / NCTC 11828).